A 235-amino-acid polypeptide reads, in one-letter code: uncharacterized protein (235 aa).

Residues 2-69 (CRLAKIISNA…KPRLWIYYKP (68 aa)) form the S4 RNA-binding domain. Asp-102 acts as the Nucleophile in catalysis.

Belongs to the pseudouridine synthase RsuA family.

The catalysed reaction is a uridine in RNA = a pseudouridine in RNA. This is an uncharacterized protein from Rickettsia prowazekii (strain Madrid E).